A 259-amino-acid polypeptide reads, in one-letter code: UPF0246 protein VSAL_I2547 (259 aa).

It belongs to the UPF0246 family.

This chain is UPF0246 protein VSAL_I2547, found in Aliivibrio salmonicida (strain LFI1238) (Vibrio salmonicida (strain LFI1238)).